Reading from the N-terminus, the 274-residue chain is Diaminopimelate epimerase (274 aa).

Residues Asn-11 and Asn-76 each coordinate substrate. The Proton donor role is filled by Cys-85. Substrate contacts are provided by residues 86-87, Asn-157, Asn-189, and 207-208; these read GN and ER. The active-site Proton acceptor is the Cys-216. 217 to 218 is a binding site for substrate; sequence GT.

Belongs to the diaminopimelate epimerase family. As to quaternary structure, homodimer.

It is found in the cytoplasm. The enzyme catalyses (2S,6S)-2,6-diaminopimelate = meso-2,6-diaminopimelate. It participates in amino-acid biosynthesis; L-lysine biosynthesis via DAP pathway; DL-2,6-diaminopimelate from LL-2,6-diaminopimelate: step 1/1. Catalyzes the stereoinversion of LL-2,6-diaminopimelate (L,L-DAP) to meso-diaminopimelate (meso-DAP), a precursor of L-lysine and an essential component of the bacterial peptidoglycan. In Thermobifida fusca (strain YX), this protein is Diaminopimelate epimerase.